The following is a 495-amino-acid chain: Tyrosine 3-monooxygenase (495 aa).

Phosphoserine; by CaMK2 is present on Ser-19. Position 31 is a phosphoserine (Ser-31). Position 40 is a phosphoserine; by CaMK2 and PKA (Ser-40). Residues 41-53 (LIEDARKEREKAE) are compositionally biased toward basic and acidic residues. A disordered region spans residues 41–65 (LIEDARKEREKAEAASAASSEPGDL). Residues His-328, His-333, and Glu-373 each contribute to the Fe cation site. The residue at position 469 (Ser-469) is a Phosphoserine.

Belongs to the biopterin-dependent aromatic amino acid hydroxylase family. Homotetramer. Interacts (when phosphorylated at Ser-19) with YWHAG; one YWHAG dimer bounds to one TH tetramer this interaction may influence the phosphorylation and dephosphorylation of other sites. Fe(2+) serves as cofactor. In terms of processing, phosphorylated on Ser-19, Ser-31 and Ser-40 by several protein kinases with different site specificities. Phosphorylation at Ser-31 and Ser-40 leads to an increase of TH activity. Phosphorylation at Ser-40 activates the enzyme and also counteracts the feedback inhibition of TH by catecholamines. Phosphorylation of Ser-19 and Ser-31 triggers the proteasomal degradation of TH through the ubiquitin-proteasome pathway. Phosphorylation at Ser-31 facilitates transport of TH from the soma to the nerve terminals via the microtubule network. Phosphorylation at Ser-19 induces the high-affinity binding to the 14-3-3 protein YWHAG; this interaction may influence the phosphorylation and dephosphorylation of other sites. Ser-19 increases the phosphorylation at Ser-40 in a hierarchical manner, leading to increased activity.

The protein resides in the cytoplasm. It is found in the perinuclear region. It localises to the nucleus. The protein localises to the cell projection. Its subcellular location is the axon. The protein resides in the cytoplasmic vesicle. It is found in the secretory vesicle. It localises to the synaptic vesicle. The enzyme catalyses (6R)-L-erythro-5,6,7,8-tetrahydrobiopterin + L-tyrosine + O2 = (4aS,6R)-4a-hydroxy-L-erythro-5,6,7,8-tetrahydrobiopterin + L-dopa. The protein operates within catecholamine biosynthesis; dopamine biosynthesis; dopamine from L-tyrosine: step 1/2. Its activity is regulated as follows. Inhibited in feedback fashion by the catecholamine neurotransmitters, especially by dopamine in competition with tetrahydrobiopterin. Phosphorylation of several Ser/Thr residues in the N-terminus regulates the catalytic activity. Ser-31 and Ser-40 are readily phosphorylated to activate the catalytic activity. A Cysteine modification induced by N-ethylmaleimide (NEM), inhibits tyrosine 3-monooxygenase activity through the modification of the Cys-174. Its function is as follows. Catalyzes the conversion of L-tyrosine to L-dihydroxyphenylalanine (L-Dopa), the rate-limiting step in the biosynthesis of cathecolamines, dopamine, noradrenaline, and adrenaline. Uses tetrahydrobiopterin and molecular oxygen to convert tyrosine to L-Dopa. In addition to tyrosine, is able to catalyze the hydroxylation of phenylalanine and tryptophan with lower specificity. Positively regulates the regression of retinal hyaloid vessels during postnatal development. In Canis lupus familiaris (Dog), this protein is Tyrosine 3-monooxygenase (TH).